We begin with the raw amino-acid sequence, 414 residues long: Snake venom metalloproteinase (414 aa).

A signal peptide spans 1–20; it reads MIEVLLVTICLAVFPYQGSS. Positions 21–190 are excised as a propeptide; sequence IILESGNVND…KASDLNFNSD (170 aa). Position 191 is a pyrrolidone carboxylic acid (Q191). The 197-residue stretch at 197–393 folds into the Peptidase M12B domain; it reads RYVELVIVAD…YKPQCILNKP (197 aa). 2 residues coordinate Ca(2+): E200 and D284. 2 disulfide bridges follow: C308–C388 and C348–C355. Residue H333 coordinates Zn(2+). E334 is an active-site residue. Zn(2+)-binding residues include H337 and H343. Ca(2+) is bound by residues C388 and N391. Positions 394–414 are excised as a propeptide; sequence LRIDPVSTPVSGNELLEAGEE.

It belongs to the venom metalloproteinase (M12B) family. P-I subfamily. As to quaternary structure, monomer. Zn(2+) serves as cofactor. Expressed by the venom gland.

The protein localises to the secreted. Snake venom metalloproteinase that impairs hemostasis in the envenomed animal. The chain is Snake venom metalloproteinase from Crotalus molossus molossus (Northern black-tailed rattlesnake).